Here is a 248-residue protein sequence, read N- to C-terminus: Triosephosphate isomerase (248 aa).

Lysine 12 is a substrate binding site. Catalysis depends on histidine 94, which acts as the Electrophile. Glutamate 165 (proton acceptor) is an active-site residue.

It belongs to the triosephosphate isomerase family. Homodimer.

The enzyme catalyses D-glyceraldehyde 3-phosphate = dihydroxyacetone phosphate. Its pathway is carbohydrate biosynthesis; gluconeogenesis. It functions in the pathway carbohydrate degradation; glycolysis; D-glyceraldehyde 3-phosphate from glycerone phosphate: step 1/1. This chain is Triosephosphate isomerase (Tpi), found in Bombyx mori (Silk moth).